A 445-amino-acid polypeptide reads, in one-letter code: Fibrinogen gamma chain (445 aa).

The N-terminal stretch at M1 to A25 is a signal peptide. A glycan (N-linked (GlcNAc...) asparagine) is linked at N78. A Fibrinogen C-terminal domain is found at R170–N416. Residues C179 and C208 are joined by a disulfide bond. Residues D344, D346, and G350 each contribute to the Ca(2+) site. An intrachain disulfide couples C352 to C365. The tract at residues T400–D422 is gamma-chain polymerization, binding amino end of another fibrin alpha chain. An Isoglutamyl lysine isopeptide (Gln-Lys) (interchain with K-432) cross-link involves residue Q424. A disordered region spans residues Q424–P445. S431 carries the phosphoserine modification. K432 participates in a covalent cross-link: Isoglutamyl lysine isopeptide (Lys-Gln) (interchain with Q-424). Positions S435–P445 are enriched in basic and acidic residues.

In terms of assembly, heterohexamer; disulfide linked. Contains 2 sets of 3 non-identical chains (alpha, beta and gamma). The 2 heterotrimers are in head to head conformation with the N-termini in a small central domain. Post-translationally, conversion of fibrinogen to fibrin is triggered by thrombin, which cleaves fibrinopeptides A and B from alpha and beta chains, and thus exposes the N-terminal polymerization sites responsible for the formation of the soft clot. The soft clot is converted into the hard clot by factor XIIIA which catalyzes the epsilon-(gamma-glutamyl)lysine cross-linking between gamma chains (stronger) and between alpha chains (weaker) of different monomers.

The protein resides in the secreted. Its function is as follows. Together with fibrinogen alpha (FGA) and fibrinogen beta (FGB), polymerizes to form an insoluble fibrin matrix. Has a major function in hemostasis as one of the primary components of blood clots. In addition, functions during the early stages of wound repair to stabilize the lesion and guide cell migration during re-epithelialization. Was originally thought to be essential for platelet aggregation, based on in vitro studies using anticoagulated blood. However, subsequent studies have shown that it is not absolutely required for thrombus formation in vivo. Enhances expression of SELP in activated platelets via an ITGB3-dependent pathway. Maternal fibrinogen is essential for successful pregnancy. Fibrin deposition is also associated with infection, where it protects against IFNG-mediated hemorrhage. May also facilitate the antibacterial immune response via both innate and T-cell mediated pathways. This chain is Fibrinogen gamma chain (Fgg), found in Rattus norvegicus (Rat).